Consider the following 289-residue polypeptide: Glucanase inhibitor protein 2 (289 aa).

The N-terminal stretch at 1-19 is a signal peptide; it reads MKVTATIAAASMAIAAASA. The Peptidase S1 domain occupies 29–257; the sequence is ILGGSIIPSG…ALKWVNPIIK (229 aa). A disulfide bridge connects residues C56 and C72. N89, N104, and N109 each carry an N-linked (GlcNAc...) asparagine glycan. 2 cysteine pairs are disulfide-bonded: C180/C192 and C202/C233.

The protein belongs to the peptidase S1 family.

Its subcellular location is the secreted. Secreted effector that suppresses host plant glucan elicitor-mediated defense responses. Targets host endoglucanases and inhibits the endoglucanase-mediated release of elicitor-active glucan oligosaccharides from P.sojae cell walls. This Phytophthora sojae (Soybean stem and root rot agent) protein is Glucanase inhibitor protein 2.